The primary structure comprises 647 residues: Chaperone protein HtpG (647 aa).

Residues 1 to 353 (MNAHVEQLEF…AQDMSLNVSR (353 aa)) are a; substrate-binding. A b region spans residues 354 to 567 (EILQQDRQIK…AFGMTPALAR (214 aa)). A c region spans residues 568–647 (IYRASGQEVP…LLAERLARTL (80 aa)).

Belongs to the heat shock protein 90 family. In terms of assembly, homodimer.

The protein resides in the cytoplasm. Molecular chaperone. Has ATPase activity. This is Chaperone protein HtpG from Mycobacterium bovis (strain ATCC BAA-935 / AF2122/97).